Here is a 124-residue protein sequence, read N- to C-terminus: Immunoglobulin lambda variable 5-52 (124 aa).

The signal sequence occupies residues 1–19 (MAWTLLLLVLLSHCTGSLS). The segment at 20–44 (QPVLTQPSSHSASSGASVRLTCMLS) is framework-1. The 104-residue stretch at 21-124 (PVLTQPSSHS…CGTWHSNSKT (104 aa)) folds into the Ig-like domain. Cysteine 41 and cysteine 115 are disulfide-bonded. The tract at residues 45 to 53 (SGFSVGDFW) is complementarity-determining-1. Residues 54 to 70 (IRWYQQKPGNPPRYLLY) are framework-2. Residues 71 to 77 (YHSDSNK) are complementarity-determining-2. Positions 78–115 (GQGSGVPSRFSGSNDASANAGILRISGLQPEDEADYYC) are framework-3. A complementarity-determining-3 region spans residues 116–124 (GTWHSNSKT).

As to quaternary structure, immunoglobulins are composed of two identical heavy chains and two identical light chains; disulfide-linked.

The protein resides in the secreted. It localises to the cell membrane. In terms of biological role, v region of the variable domain of immunoglobulin light chains that participates in the antigen recognition. Immunoglobulins, also known as antibodies, are membrane-bound or secreted glycoproteins produced by B lymphocytes. In the recognition phase of humoral immunity, the membrane-bound immunoglobulins serve as receptors which, upon binding of a specific antigen, trigger the clonal expansion and differentiation of B lymphocytes into immunoglobulins-secreting plasma cells. Secreted immunoglobulins mediate the effector phase of humoral immunity, which results in the elimination of bound antigens. The antigen binding site is formed by the variable domain of one heavy chain, together with that of its associated light chain. Thus, each immunoglobulin has two antigen binding sites with remarkable affinity for a particular antigen. The variable domains are assembled by a process called V-(D)-J rearrangement and can then be subjected to somatic hypermutations which, after exposure to antigen and selection, allow affinity maturation for a particular antigen. The protein is Immunoglobulin lambda variable 5-52 of Homo sapiens (Human).